We begin with the raw amino-acid sequence, 965 residues long: Collagen alpha-1(I) chain (965 aa).

The interval 1–965 (GGISVPGPMG…PGPPGPPGPP (965 aa)) is disordered. Residues Pro-18, Pro-21, Pro-23, Pro-32, Pro-35, Pro-38, Pro-53, Pro-68, Pro-74, Pro-83, and Pro-89 each carry the 4-hydroxyproline modification. Positions 26 to 44 (QGFQGPPGEPGEPGSSGPM) are enriched in low complexity. A compositionally biased stretch (basic and acidic residues) spans 56–70 (NGDDGEAGKPGRPGE). Lys-92 carries the post-translational modification 5-hydroxylysine; alternate. Lys-92 carries O-linked (Gal...) hydroxylysine; alternate glycosylation. A Phosphoserine modification is found at Ser-98. Low complexity predominate over residues 106 to 122 (DAGPAGPKGEPGSPGEN). Residues Pro-116, Pro-119, Pro-125, Pro-139, Pro-160, Pro-169, Pro-172, Pro-199, Pro-202, Pro-214, Pro-220, Pro-229, Pro-235, Pro-238, and Pro-253 each carry the 4-hydroxyproline modification. Residues 139–157 (PGASGPAGARGNDGATGAA) are compositionally biased toward low complexity. Pro residues predominate over residues 159-171 (PPGPTGPAGPPGF). Over residues 205–244 (AGAAGPAGNPGADGQPGAKGANGAPGIAGAPGFPGARGPS) the composition is skewed to low complexity. Lys-256 carries the post-translational modification 5-hydroxylysine. Pro-262, Pro-265, Pro-269, Pro-278, Pro-293, Pro-299, Pro-308, and Pro-314 each carry 4-hydroxyproline. Residues 303–312 (GERGGPGSRG) show a composition bias toward gly residues. Lys-323 is subject to 5-hydroxylysine. Residues Pro-326, Pro-332, Pro-338, Pro-347, Pro-350, Pro-359, Pro-368, Pro-374, Pro-386, Pro-395, Pro-404, Pro-407, Pro-425, Pro-442, Pro-448, Pro-454, Pro-460, Pro-466, Pro-472, Pro-484, Pro-493, Pro-506, Pro-512, and Pro-521 each carry the 4-hydroxyproline modification. Over residues 341-367 (KGLTGSPGSPGPDGKTGPPGPAGQDGR) the composition is skewed to low complexity. A compositionally biased stretch (low complexity) spans 376-395 (ARGQAGVMGFPGPKGAAGEP). The segment covering 454-463 (PGEAGKPGEQ) has biased composition (low complexity). Residue Lys-533 is modified to 5-hydroxylysine. 3 positions are modified to 4-hydroxyproline: Pro-539, Pro-554, and Pro-560. The span at 566–580 (SGPSGPAGPTGARGA) shows a compositional bias: low complexity. Position 569 is a phosphoserine (Ser-569). 4-hydroxyproline is present on residues Pro-581, Pro-587, Pro-590, Pro-599, Pro-605, Pro-623, Pro-632, and Pro-641. A compositionally biased stretch (low complexity) spans 593–620 (AGFAGPPGADGQPGAKGEPGDAGAKGDA). At Lys-644 the chain carries 5-hydroxylysine. Over residues 649 to 665 (SAGPPGATGFPGAAGRV) the composition is skewed to low complexity. 2 positions are modified to 4-hydroxyproline: Pro-653 and Pro-659. Residue Pro-667 is modified to 3-hydroxyproline. 14 positions are modified to 4-hydroxyproline: Pro-668, Pro-677, Pro-680, Pro-716, Pro-725, Pro-743, Pro-752, Pro-755, Pro-761, Pro-776, Pro-782, Pro-788, Pro-796, and Pro-802. The segment covering 710-725 (SGEKGSPGADGPAGAP) has biased composition (low complexity). Positions 775–785 (PPGPMGPPGLA) are enriched in pro residues. A 5-hydroxylysine modification is found at Lys-811. A 4-hydroxyproline mark is found at Pro-819, Pro-822, and Pro-825. The span at 819–831 (PGAPGAPGAPGPV) shows a compositional bias: pro residues. Residues 851-865 (AGPAGARGPAGPQGP) show a composition bias toward low complexity. The span at 866-880 (RGDKGETGEQGDRGI) shows a compositional bias: basic and acidic residues. 5-hydroxylysine is present on Lys-869. The residue at position 881 (Lys-881) is a 5-hydroxylysine; alternate. Residue Lys-881 is glycosylated (O-linked (Gal...) hydroxylysine; alternate). Pro-896, Pro-899, Pro-917, and Pro-932 each carry 4-hydroxyproline. Residues 899-932 (PGEQGPSGASGPAGPRGPPGSAGSPGKDGLNGLP) show a composition bias toward low complexity. Residue Pro-937 is modified to 3-hydroxyproline. Residue Pro-938 is modified to 4-hydroxyproline. Residues 950-965 (VGPPGPPGPPGPPGPP) show a composition bias toward pro residues. Pro-952 bears the 3-hydroxyproline mark. The residue at position 953 (Pro-953) is a 4-hydroxyproline. Pro-955 carries the 3-hydroxyproline modification. Pro-956 carries the 4-hydroxyproline modification. Pro-958 is subject to 3-hydroxyproline. 4-hydroxyproline occurs at positions 959, 962, and 965.

The protein belongs to the fibrillar collagen family. Trimers of one alpha 2(I) and two alpha 1(I) chains. Post-translationally, contains mostly 4-hydroxyproline. Proline residues at the third position of the tripeptide repeating unit (G-X-Y) are hydroxylated in some or all of the chains. Contains 3-hydroxyproline at a few sites. This modification occurs on the first proline residue in the sequence motif Gly-Pro-Hyp, where Hyp is 4-hydroxyproline. In terms of processing, lysine residues at the third position of the tripeptide repeating unit (G-X-Y) are 5-hydroxylated in some or all of the chains. Post-translationally, O-glycosylated on hydroxylated lysine residues. The O-linked glycan consists of a Glc-Gal disaccharide. As to expression, expressed in bones.

It localises to the secreted. It is found in the extracellular space. The protein localises to the extracellular matrix. Type I collagen is a member of group I collagen (fibrillar forming collagen). The polypeptide is Collagen alpha-1(I) chain (Acratocnus sp. (strain SLP-2019) (Ground sloth)).